Here is an 88-residue protein sequence, read N- to C-terminus: Small ribosomal subunit protein bS16c (88 aa).

It belongs to the bacterial ribosomal protein bS16 family.

It is found in the plastid. The protein localises to the chloroplast. The polypeptide is Small ribosomal subunit protein bS16c (Gossypium hirsutum (Upland cotton)).